The primary structure comprises 181 residues: Major urinary protein 11 (181 aa).

A signal peptide spans 1–19 (MKMLLLLLCLGLTLVCVHA). A disulfide bridge links C83 with C176.

This sequence belongs to the calycin superfamily. Lipocalin family.

It localises to the secreted. Major urinary proteins (Mups) bind pheromones, and thus stabilize them to allow slow release into the air from urine marks. May protect pheromones from oxidation. May also act as pheromones themselves. In this context, they play a role in the regulation of social behaviors, such as aggression, mating, pup-suckling, territory establishment and dominance. Binds the pheromone analog 2-sec-butyl-4,5-dihydrothiazole (SBT) in vitro. The polypeptide is Major urinary protein 11 (Mus musculus (Mouse)).